A 91-amino-acid polypeptide reads, in one-letter code: uncharacterized protein (91 aa).

2 consecutive transmembrane segments (helical) span residues 5–27 (FFKY…TNFQ) and 47–69 (DFYH…FIFF).

It localises to the cell membrane. This is an uncharacterized protein from Archaeoglobus fulgidus (strain ATCC 49558 / DSM 4304 / JCM 9628 / NBRC 100126 / VC-16).